Reading from the N-terminus, the 381-residue chain is Heme A synthase (381 aa).

Residues 1–28 (MSNRTIFEEVSSDSKQQSSPTPGGIDRK) form a disordered region. 8 helical membrane-spanning segments follow: residues 36 to 56 (IRVWLAVLFALVVAMIAVGGL), 125 to 145 (VIGLIWALGFFGFLVTRSIPT), 151 to 171 (LLLPGILGGVQGAIGWWMVAS), 187 to 207 (LATHLGLAFVILGFLAWYMFL), 230 to 250 (STGLLHFAFLQILLGALVAGI), 287 to 307 (LVQFIHRVAGYLLFAFAVVVW), 320 to 340 (FAFNAVFAALSLQLVIGIVTV), and 344 to 364 (APVEIAIVHQAVAVLVWVLIL). Position 292 (His-292) interacts with heme. Position 352 (His-352) interacts with heme.

The protein belongs to the COX15/CtaA family. Type 2 subfamily. Interacts with CtaB. Heme b is required as a cofactor.

It is found in the cell membrane. The enzyme catalyses Fe(II)-heme o + 2 A + H2O = Fe(II)-heme a + 2 AH2. Its pathway is porphyrin-containing compound metabolism; heme A biosynthesis; heme A from heme O: step 1/1. Functionally, catalyzes the conversion of heme O to heme A by two successive hydroxylations of the methyl group at C8. The first hydroxylation forms heme I, the second hydroxylation results in an unstable dihydroxymethyl group, which spontaneously dehydrates, resulting in the formyl group of heme A. This is Heme A synthase from Ruegeria sp. (strain TM1040) (Silicibacter sp.).